Reading from the N-terminus, the 128-residue chain is Small ribosomal subunit protein uS11 (128 aa).

This sequence belongs to the universal ribosomal protein uS11 family. Part of the 30S ribosomal subunit. Interacts with proteins S7 and S18. Binds to IF-3.

In terms of biological role, located on the platform of the 30S subunit, it bridges several disparate RNA helices of the 16S rRNA. Forms part of the Shine-Dalgarno cleft in the 70S ribosome. The polypeptide is Small ribosomal subunit protein uS11 (Onion yellows phytoplasma (strain OY-M)).